Consider the following 284-residue polypeptide: uncharacterized protein (284 aa).

Gln54 provides a ligand contact to FMN. Cys83 functions as the Proton donor in the catalytic mechanism. FMN is bound by residues Lys125, His153, 183–185 (NGG), and 207–208 (AN).

The protein belongs to the Dus family. FMN is required as a cofactor.

Functionally, catalyzes the synthesis of dihydrouridine, a modified base found in the D-loop of most tRNAs. This is an uncharacterized protein from Caenorhabditis elegans.